The sequence spans 1268 residues: Vigilin (1268 aa).

The residue at position 2 (Ser-2) is an N-acetylserine. Phosphothreonine is present on Thr-8. Residues Ser-11, Ser-31, and Ser-35 each carry the phosphoserine modification. 7 consecutive KH domains span residues 150–212 (QASA…RHEV), 222–284 (RAVK…VARI), 295–357 (TTTI…LTEV), 364–424 (FTVS…QEQI), 435–497 (MDYV…KREL), 507–570 (ERTK…TKYM), and 581–643 (SYSI…RSRI). Phosphothreonine is present on residues Thr-295 and Thr-296. Ser-317 bears the Phosphoserine mark. Tyr-437 is subject to Phosphotyrosine. Phosphoserine is present on Ser-645. 7 KH domains span residues 653–716 (IAEV…KKQL), 727–790 (SFTV…QKEL), 800–863 (VVED…KKRI), 873–967 (QVTL…KEAL), 972–1034 (PVTI…KAGL), 1052–1117 (SFKL…RDAI), and 1127–1190 (MVSE…IDHI). The disordered stretch occupies residues 910–946 (PDREENPVHSVEPSIQENGDEAGEGREAKETDPGSPR). The segment covering 932–946 (GEGREAKETDPGSPR) has biased composition (basic and acidic residues). The residue at position 991 (Lys-991) is an N6-acetyllysine. Positions 1214 to 1268 (PAHEESKAPSKGFVVRDAPWTSNSSEKAPDMSSSEEIPTFGAQVAPKTLPWGPKR) are disordered. Residues 1233-1249 (WTSNSSEKAPDMSSSEE) are compositionally biased toward polar residues. Ser-1247 carries the phosphoserine modification.

It is found in the cytoplasm. Its subcellular location is the nucleus. Appears to play a role in cell sterol metabolism. It may function to protect cells from over-accumulation of cholesterol. This chain is Vigilin (Hdlbp), found in Rattus norvegicus (Rat).